Here is a 506-residue protein sequence, read N- to C-terminus: uncharacterized protein (506 aa).

Belongs to the Mg-chelatase subunits D/I family. ComM subfamily.

This is an uncharacterized protein from Salmonella typhimurium (strain LT2 / SGSC1412 / ATCC 700720).